A 368-amino-acid polypeptide reads, in one-letter code: H-2 class I histocompatibility antigen, K-W28 alpha chain (368 aa).

The first 21 residues, 1–21, serve as a signal peptide directing secretion; that stretch reads MAPCMLLLLLAAALAPTQTRA. The alpha-1 stretch occupies residues 22–111; sequence GPHSLRYFHT…LLRYYNQSAG (90 aa). Residues 22 to 305 are Extracellular-facing; the sequence is GPHSLRYFHT…EPPPSAVSNT (284 aa). N107 is a glycosylation site (N-linked (GlcNAc...) asparagine). An alpha-2 region spans residues 112-203; the sequence is GSHTIQRMYG…KNGNATLLRT (92 aa). C122 and C185 are joined by a disulfide. An N-linked (GlcNAc...) asparagine glycan is attached at N197. The tract at residues 204 to 295 is alpha-3; it reads DSPKAHVTHH…GLPKPLTLRW (92 aa). In terms of domain architecture, Ig-like C1-type spans 206-292; the sequence is PKAHVTHHSR…YHQGLPKPLT (87 aa). An intrachain disulfide couples C224 to C280. A connecting peptide region spans residues 296-305; that stretch reads EPPPSAVSNT. The chain crosses the membrane as a helical span at residues 306-329; the sequence is VIIAVLVVLGAAIVTGAVVAFVMM. Topologically, residues 330–368 are cytoplasmic; that stretch reads RRRNTGGKGGDYALAPGSQTSDLSLPDCKVMVHDPHSLA. Phosphoserine occurs at positions 350 and 353.

It belongs to the MHC class I family. In terms of assembly, heterodimer of an alpha chain and a beta chain (beta-2-microglobulin).

Its subcellular location is the membrane. Functionally, involved in the presentation of foreign antigens to the immune system. The chain is H-2 class I histocompatibility antigen, K-W28 alpha chain (H2-K1) from Mus musculus (Mouse).